The chain runs to 370 residues: Molybdenum import ATP-binding protein ModC (370 aa).

Residues 2-233 (SVRVDIGHRL…LDLLPAEERG (232 aa)) enclose the ABC transporter domain. An ATP-binding site is contributed by 31-38 (GPSGSGKT). The Mop domain occupies 293-359 (GLSALNILPG…VKTVSFDRAN (67 aa)).

The protein belongs to the ABC transporter superfamily. Molybdate importer (TC 3.A.1.8) family. The complex is composed of two ATP-binding proteins (ModC), two transmembrane proteins (ModB) and a solute-binding protein (ModA).

It localises to the cell inner membrane. It carries out the reaction molybdate(out) + ATP + H2O = molybdate(in) + ADP + phosphate + H(+). Part of the ABC transporter complex ModABC involved in molybdenum import. Responsible for energy coupling to the transport system. The protein is Molybdenum import ATP-binding protein ModC of Mesorhizobium japonicum (strain LMG 29417 / CECT 9101 / MAFF 303099) (Mesorhizobium loti (strain MAFF 303099)).